The sequence spans 183 residues: Neuroblastoma suppressor of tumorigenicity 1 (183 aa).

The first 19 residues, 1–19 (MVMCVRAVLVCVLLELSRA), serve as a signal peptide directing secretion. Cystine bridges form between Cys38–Cys88, Cys52–Cys102, Cys62–Cys121, Cys66–Cys123, and Cys85–Cys126. The CTCK domain maps to 38–127 (CEAKNITQIV…ILHCSCQSCS (90 aa)). The segment at 145–170 (AQDLPSLPDATHTHPQHAHMQADQRD) is disordered.

Belongs to the DAN family.

It is found in the secreted. Its function is as follows. May act as a tumor suppressor. The polypeptide is Neuroblastoma suppressor of tumorigenicity 1 (nbl1) (Danio rerio (Zebrafish)).